The following is a 532-amino-acid chain: Phosphoribosylamine--glycine ligase, chloroplastic (532 aa).

A chloroplast-targeting transit peptide spans 1 to 75 (MSSLCASNCY…IQRRLFLLRC (75 aa)). Residues 204-412 (KNLCHKYNIP…LAKVLLAACK (209 aa)) form the ATP-grasp domain.

This sequence belongs to the GARS family.

It localises to the plastid. The protein resides in the chloroplast. It catalyses the reaction 5-phospho-beta-D-ribosylamine + glycine + ATP = N(1)-(5-phospho-beta-D-ribosyl)glycinamide + ADP + phosphate + H(+). The protein operates within purine metabolism; IMP biosynthesis via de novo pathway; N(1)-(5-phospho-D-ribosyl)glycinamide from 5-phospho-alpha-D-ribose 1-diphosphate: step 2/2. This is Phosphoribosylamine--glycine ligase, chloroplastic (PUR2) from Arabidopsis thaliana (Mouse-ear cress).